An 879-amino-acid chain; its full sequence is Exocyst complex component 1 (879 aa).

Positions 29–94 (SQYSESEYDP…ATSLGNNDGD (66 aa)) are disordered. The span at 40-52 (ETTHSESDSENHH) shows a compositional bias: basic and acidic residues. The segment covering 64–76 (FLSQSNDNVSNGP) has biased composition (polar residues). A compositionally biased stretch (low complexity) spans 77–91 (SNNTLSSSATSLGNN). Coiled coils occupy residues 165–187 (YNKQ…NKME) and 226–248 (KGLK…KLKS). 2 disordered regions span residues 371 to 413 (QNDF…GKDG) and 455 to 557 (GQRN…PDAP). A compositionally biased stretch (low complexity) spans 373-409 (DFFSSSSSSKKSIDSLNNNTSTSTPSKNSSSSSSSSS). Residues 480–500 (KKSSKKDKKDKKDKKDKKDKK) are compositionally biased toward basic residues. Polar residues predominate over residues 519–532 (DSNSPKSPNNAVNG). Over residues 541–551 (SPPPPPPPPPK) the composition is skewed to pro residues.

The protein belongs to the SEC3 family. The exocyst complex is composed of sec3/exoc1, sec5/exoc2, sec6/exoc3, sec8/exoc4, sec10/exoc5, sec15/exoc6, exo70/exoc7 and exo84/exoc8.

It localises to the midbody. Its subcellular location is the midbody ring. Component of the exocyst complex involved in the docking of exocytic vesicles with fusion sites on the plasma membrane. In Dictyostelium discoideum (Social amoeba), this protein is Exocyst complex component 1 (exoc1).